A 335-amino-acid chain; its full sequence is MSVLLGQILDALGGELVGGDREMPISRIAPLDSAGAGDLSFLSNPRYRQQLAASEAACVIVAPAMRELAQQRGACIVVPDPYAYFARATQWWKRNCRSVAPAGIHPSAVVHESAIVDASATIGPLCVVEEGATIGAHTVLKSRVTIGENCHVGARCLLHSGVVLGADGFGFAPENGAWVKIEQLGGVRIGDDVEIGANTCIDRGALDDTVIEDGVKLDNLIQIGHNVHVGKHTAMAGCVGVAGSARIGAHCTVGGGAIVLGHLQLADRVHISAATVVTRSLTQSGVYTGMFPVDENAKWEKNAATLKQLHSMRDRIKALERQLQQSADQGHNGTQ.

His225 serves as the catalytic Proton acceptor.

It belongs to the transferase hexapeptide repeat family. LpxD subfamily. In terms of assembly, homotrimer.

The catalysed reaction is a UDP-3-O-[(3R)-3-hydroxyacyl]-alpha-D-glucosamine + a (3R)-hydroxyacyl-[ACP] = a UDP-2-N,3-O-bis[(3R)-3-hydroxyacyl]-alpha-D-glucosamine + holo-[ACP] + H(+). It functions in the pathway bacterial outer membrane biogenesis; LPS lipid A biosynthesis. Catalyzes the N-acylation of UDP-3-O-acylglucosamine using 3-hydroxyacyl-ACP as the acyl donor. Is involved in the biosynthesis of lipid A, a phosphorylated glycolipid that anchors the lipopolysaccharide to the outer membrane of the cell. The chain is UDP-3-O-acylglucosamine N-acyltransferase from Delftia acidovorans (strain DSM 14801 / SPH-1).